A 216-amino-acid polypeptide reads, in one-letter code: Transmembrane emp24 domain-containing protein eca (216 aa).

Positions 1 to 20 (MRDQFISLALILCVLHSACG) are cleaved as a signal peptide. Residues 21 to 182 (LYFHISETER…FRHTSESTNS (162 aa)) are Lumenal-facing. A GOLD domain is found at 30–126 (RKCFIEEVPD…QLRVHLDIQV (97 aa)). The stretch at 134-164 (AHVAQKEKLTELQLRIRQLLDQVEQITKEQN) forms a coiled coil. A helical transmembrane segment spans residues 183-203 (RVLWWSLAQTVVLVCMGFWQM). Residues 204–216 (RHLKSFFEAKKLV) lie on the Cytoplasmic side of the membrane. A Prevents secretion from ER motif is present at residues 213-216 (KKLV).

The protein belongs to the EMP24/GP25L family.

It localises to the endoplasmic reticulum membrane. In terms of biological role, eca and bai are essential, though not redundant, for dorsoventral patterning of the embryo. Specifically required during early embryogenesis for the activity of maternal tkv, while the zygotic tkv is not affected. Involved in Golgi organization. The polypeptide is Transmembrane emp24 domain-containing protein eca (Drosophila melanogaster (Fruit fly)).